We begin with the raw amino-acid sequence, 375 residues long: MEVISTNTNGSTIFKNGAIPMNGHQNGTSEHLNGYQNGTSKHQNGHQNGTFEHRNGHQNGTSEQQNGTISHDNGNELLGSSDSIKPGWFSEFSALWPGEAFSLKVEKLLFQGKSDYQDVMLFESATYGKVLTLDGAIQHTENGGFPYTEMIVHLPLGSIPNPKKVLIIGGGIGFTLFEMLRYPSIEKIDIVEIDDVVVDVSRKFFPYLAANFNDPRVTLVLGDGAAFVKAAQAGYYDAIIVDSSDPIGPAKDLFERPFFEAVAKALRPGGVVCTQAESIWLHMHIIKQIIANCRQVFKGSVNYAWTTVPTYPTGVIGYMLCSTEGPEVDFKNPVNPIDKETTQVKSKLGPLKFYNSDIHKAAFILPSFARSMIES.

Composition is skewed to polar residues over residues 24–50 and 57–77; these read HQNG…QNGT and HQNG…GNEL. The tract at residues 24–77 is disordered; it reads HQNGTSEHLNGYQNGTSKHQNGHQNGTFEHRNGHQNGTSEQQNGTISHDNGNEL. In terms of domain architecture, PABS spans 86–323; it reads PGWFSEFSAL…GVIGYMLCST (238 aa). Residues Q117, E192, and 223 to 224 each bind S-adenosyl-L-methionine; that span reads DG. D242 (proton acceptor) is an active-site residue. Position 311 (Y311) interacts with S-adenosyl-L-methionine.

This sequence belongs to the class I-like SAM-binding methyltransferase superfamily. Putrescine methyltransferase family. As to expression, predominantly expressed in roots.

The catalysed reaction is putrescine + S-adenosyl-L-methionine = N-methylputrescine + S-adenosyl-L-homocysteine + H(+). It functions in the pathway alkaloid biosynthesis; nicotine biosynthesis. Its function is as follows. Involved in the biosynthesis of pyridine alkaloid natural products, leading mainly to the production of anabasine, anatabine, nicotine and nornicotine, effective deterrents against herbivores with antiparasitic and pesticide properties (neurotoxins); nornicotine serves as the precursor in the synthesis of the carcinogen compound N'-nitrosonornicotine (NNN). Methyltransferase that mediates the conversion of putrescine to N-methylputrescine. Promotes leaves ripening. This Nicotiana tabacum (Common tobacco) protein is Putrescine N-methyltransferase 1.